Reading from the N-terminus, the 400-residue chain is Formate-dependent phosphoribosylglycinamide formyltransferase (400 aa).

Residues 22–23 (EL) and glutamate 82 contribute to the N(1)-(5-phospho-beta-D-ribosyl)glycinamide site. ATP-binding positions include arginine 115, lysine 157, 162–167 (SSGKGQ), 197–200 (EGFV), and glutamate 205. Residues 120–315 (RLAAETLGVP…EFELHARAIL (196 aa)) form the ATP-grasp domain. Glutamate 274 and glutamate 286 together coordinate Mg(2+). N(1)-(5-phospho-beta-D-ribosyl)glycinamide contacts are provided by residues aspartate 293, lysine 362, and 369–370 (RR).

Belongs to the PurK/PurT family. As to quaternary structure, homodimer.

The catalysed reaction is N(1)-(5-phospho-beta-D-ribosyl)glycinamide + formate + ATP = N(2)-formyl-N(1)-(5-phospho-beta-D-ribosyl)glycinamide + ADP + phosphate + H(+). It participates in purine metabolism; IMP biosynthesis via de novo pathway; N(2)-formyl-N(1)-(5-phospho-D-ribosyl)glycinamide from N(1)-(5-phospho-D-ribosyl)glycinamide (formate route): step 1/1. In terms of biological role, involved in the de novo purine biosynthesis. Catalyzes the transfer of formate to 5-phospho-ribosyl-glycinamide (GAR), producing 5-phospho-ribosyl-N-formylglycinamide (FGAR). Formate is provided by PurU via hydrolysis of 10-formyl-tetrahydrofolate. In Mycolicibacterium smegmatis (strain ATCC 700084 / mc(2)155) (Mycobacterium smegmatis), this protein is Formate-dependent phosphoribosylglycinamide formyltransferase.